A 470-amino-acid chain; its full sequence is Probable glycosyltransferase At3g07620 (470 aa).

The Cytoplasmic segment spans residues 1-7 (MRDYIPK). A helical; Signal-anchor transmembrane segment spans residues 8-28 (YLNAFLLAFATFAVGFAIFIA). Residues 29-470 (KDSNSSSHLY…WLRRLNVKLL (442 aa)) are Lumenal-facing. 6 N-linked (GlcNAc...) asparagine glycosylation sites follow: Asn-32, Asn-73, Asn-105, Asn-236, Asn-274, and Asn-299.

It belongs to the glycosyltransferase 47 family.

The protein resides in the golgi apparatus membrane. Its function is as follows. May be involved in cell wall biosynthesis. This Arabidopsis thaliana (Mouse-ear cress) protein is Probable glycosyltransferase At3g07620.